The following is a 288-amino-acid chain: NAD(P)H-hydrate epimerase (288 aa).

The transit peptide at 1-47 (MSRLRALLGLGLLVAGSRVPRIKSQTIACRSGPTWWGPQRLNSGGRW) directs the protein to the mitochondrion. Ser49 is modified (phosphoserine). Positions 65-275 (AQAVDQELFN…ALEKKYQLNL (211 aa)) constitute a YjeF N-terminal domain. 119 to 123 (NNGGD) is a binding site for (6S)-NADPHX. K(+) is bound at residue Asn120. At Lys144 the chain carries N6-succinyllysine. A K(+)-binding site is contributed by Asp185. (6S)-NADPHX-binding positions include 189-195 (GFSFKGD) and Asp218. K(+) is bound at residue Ser221.

This sequence belongs to the NnrE/AIBP family. As to quaternary structure, homodimer. Interacts with APOA1 and APOA2. K(+) serves as cofactor. Undergoes physiological phosphorylation during sperm capacitation, downstream to PKA activation. Ubiquitously expressed, with highest levels in kidney, heart and liver. Present in cerebrospinal fluid and urine but not in serum from healthy patients. Present in serum of sepsis patients (at protein level).

It is found in the mitochondrion. The protein localises to the secreted. The catalysed reaction is (6R)-NADHX = (6S)-NADHX. The enzyme catalyses (6R)-NADPHX = (6S)-NADPHX. Functionally, catalyzes the epimerization of the S- and R-forms of NAD(P)HX, a damaged form of NAD(P)H that is a result of enzymatic or heat-dependent hydration. This is a prerequisite for the S-specific NAD(P)H-hydrate dehydratase to allow the repair of both epimers of NAD(P)HX. Accelerates cholesterol efflux from endothelial cells to high-density lipoprotein (HDL) and thereby regulates angiogenesis. The polypeptide is NAD(P)H-hydrate epimerase (Homo sapiens (Human)).